The sequence spans 379 residues: RNA-splicing ligase RtcB2 (379 aa).

Residues Asp-74, Cys-77, His-137, His-168, and His-239 each coordinate Mn(2+). 136-140 (NHFVE) contacts GMP. GMP is bound by residues 239–240 (HN), Ser-277, 294–297 (HGAG), and Lys-372. His-294 functions as the GMP-histidine intermediate in the catalytic mechanism.

Belongs to the RtcB family. RtcB2 subfamily. Mn(2+) serves as cofactor.

It catalyses the reaction a 3'-end 3'-phospho-ribonucleotide-RNA + a 5'-end dephospho-ribonucleoside-RNA + GTP = a ribonucleotidyl-ribonucleotide-RNA + GMP + diphosphate. In terms of biological role, GTP-dependent RNA ligase involved in rRNA repair. Repairs damaged 16S rRNA in 30S subunits that has been cleaved between adenine-1493 and guanosine-1494 (E.coli nubering). This specific cleavage is inflicted by CdiA (ECL_04451) or by colicin E3-type (ColE3) proteins. Poorly repairs damaged rRNA in the 70S ribosome; addition of release factor PrfH improves repair about 3-fold in vitro, probably because PrfH hydrolyzes the nascent chain allowing ribosomal subunit dissociation. In vivo the PrfH-RtcB2 pair restores growth in the presence of ribotoxins that specifically create this damage. Does not repair damaged tRNA (tested with tRNA(Asp) and tRNA(Arg)). The protein is RNA-splicing ligase RtcB2 of Escherichia coli (strain ATCC 25922 / DSM 1103 / LMG 8223 / NCIMB 12210 / NCTC 12241 / WDCM 00013 / Seattle 1946).